The following is a 162-amino-acid chain: Ribosome maturation factor RimM (162 aa).

Positions 86-160 (EGRYYYFALI…GIHVDPIPGL (75 aa)) constitute a PRC barrel domain.

Belongs to the RimM family. As to quaternary structure, binds ribosomal protein uS19.

The protein resides in the cytoplasm. Its function is as follows. An accessory protein needed during the final step in the assembly of 30S ribosomal subunit, possibly for assembly of the head region. Essential for efficient processing of 16S rRNA. May be needed both before and after RbfA during the maturation of 16S rRNA. It has affinity for free ribosomal 30S subunits but not for 70S ribosomes. This is Ribosome maturation factor RimM from Thermus thermophilus (strain ATCC BAA-163 / DSM 7039 / HB27).